A 395-amino-acid chain; its full sequence is Elongation factor Tu (395 aa).

One can recognise a tr-type G domain in the interval 10-204; that stretch reads KPHVNIGTIG…AIDNWIPLPQ (195 aa). Residues 19–26 form a G1 region; sequence GHVDHGKT. 19 to 26 provides a ligand contact to GTP; it reads GHVDHGKT. Residue Thr26 participates in Mg(2+) binding. The segment at 60 to 64 is G2; it reads GITIN. The G3 stretch occupies residues 81 to 84; the sequence is DCPG. Residues 81–85 and 136–139 contribute to the GTP site; these read DCPGH and NKVD. The tract at residues 136 to 139 is G4; it reads NKVD. The interval 174–176 is G5; that stretch reads SAL.

This sequence belongs to the TRAFAC class translation factor GTPase superfamily. Classic translation factor GTPase family. EF-Tu/EF-1A subfamily. In terms of assembly, monomer.

It is found in the cytoplasm. The enzyme catalyses GTP + H2O = GDP + phosphate + H(+). Functionally, GTP hydrolase that promotes the GTP-dependent binding of aminoacyl-tRNA to the A-site of ribosomes during protein biosynthesis. This is Elongation factor Tu from Azobacteroides pseudotrichonymphae genomovar. CFP2.